The chain runs to 468 residues: Cysteine--tRNA ligase (468 aa).

Zn(2+) is bound at residue cysteine 33. Positions 35–45 match the 'HIGH' region motif; it reads ATVQGLPHIGH. Zn(2+) is bound by residues cysteine 211, histidine 236, and glutamate 240. A 'KMSKS' region motif is present at residues 267-271; sequence KMSKS. ATP is bound at residue lysine 270.

The protein belongs to the class-I aminoacyl-tRNA synthetase family. Monomer. It depends on Zn(2+) as a cofactor.

Its subcellular location is the cytoplasm. It carries out the reaction tRNA(Cys) + L-cysteine + ATP = L-cysteinyl-tRNA(Cys) + AMP + diphosphate. The polypeptide is Cysteine--tRNA ligase (Mycobacterium marinum (strain ATCC BAA-535 / M)).